Here is a 180-residue protein sequence, read N- to C-terminus: MFPMVTGFMSYGQQTIRATRYIGQSFITTLSHTNRLPITIHYPYEKSITPERFRGRIHFEFDKCIACEVCVRVCPIDLPVVDWRFEKDIKRKQLLNYSIDFGVCIFCGNCVEYCPTSCLSMTEEYELSTYDRHELNYNQIALSRLPISIMGDYTIQTIRNSSESKINEEKSSNSRTITDY.

2 4Fe-4S ferredoxin-type domains span residues 55-84 (GRIHFEFDKCIACEVCVRVCPIDLPVVDWR) and 95-124 (LNYSIDFGVCIFCGNCVEYCPTSCLSMTEE). 8 residues coordinate [4Fe-4S] cluster: C64, C67, C70, C74, C104, C107, C110, and C114.

Belongs to the complex I 23 kDa subunit family. In terms of assembly, NDH is composed of at least 16 different subunits, 5 of which are encoded in the nucleus. [4Fe-4S] cluster is required as a cofactor.

It localises to the plastid. It is found in the chloroplast thylakoid membrane. The catalysed reaction is a plastoquinone + NADH + (n+1) H(+)(in) = a plastoquinol + NAD(+) + n H(+)(out). It catalyses the reaction a plastoquinone + NADPH + (n+1) H(+)(in) = a plastoquinol + NADP(+) + n H(+)(out). In terms of biological role, NDH shuttles electrons from NAD(P)H:plastoquinone, via FMN and iron-sulfur (Fe-S) centers, to quinones in the photosynthetic chain and possibly in a chloroplast respiratory chain. The immediate electron acceptor for the enzyme in this species is believed to be plastoquinone. Couples the redox reaction to proton translocation, and thus conserves the redox energy in a proton gradient. The protein is NAD(P)H-quinone oxidoreductase subunit I, chloroplastic of Hordeum vulgare (Barley).